A 344-amino-acid chain; its full sequence is S-adenosylmethionine:tRNA ribosyltransferase-isomerase (344 aa).

Belongs to the QueA family. Monomer.

It localises to the cytoplasm. It catalyses the reaction 7-aminomethyl-7-carbaguanosine(34) in tRNA + S-adenosyl-L-methionine = epoxyqueuosine(34) in tRNA + adenine + L-methionine + 2 H(+). The protein operates within tRNA modification; tRNA-queuosine biosynthesis. Its function is as follows. Transfers and isomerizes the ribose moiety from AdoMet to the 7-aminomethyl group of 7-deazaguanine (preQ1-tRNA) to give epoxyqueuosine (oQ-tRNA). This chain is S-adenosylmethionine:tRNA ribosyltransferase-isomerase, found in Heliobacterium modesticaldum (strain ATCC 51547 / Ice1).